A 311-amino-acid polypeptide reads, in one-letter code: Ribosomal protein L11 methyltransferase (311 aa).

Thr162, Gly183, Asp205, and Asn248 together coordinate S-adenosyl-L-methionine.

This sequence belongs to the methyltransferase superfamily. PrmA family.

The protein resides in the cytoplasm. The enzyme catalyses L-lysyl-[protein] + 3 S-adenosyl-L-methionine = N(6),N(6),N(6)-trimethyl-L-lysyl-[protein] + 3 S-adenosyl-L-homocysteine + 3 H(+). Its function is as follows. Methylates ribosomal protein L11. This chain is Ribosomal protein L11 methyltransferase, found in Bacillus pumilus (strain SAFR-032).